Consider the following 158-residue polypeptide: uncharacterized protein (158 aa).

An HTH asnC-type domain is found at 12–73; that stretch reads LDEIDRAILR…LINPFKAGYE (62 aa). Positions 31-50 form a DNA-binding region, H-T-H motif; the sequence is YSEISRRINVPESTVRARVN.

This is an uncharacterized protein from Pyrococcus abyssi (strain GE5 / Orsay).